A 464-amino-acid polypeptide reads, in one-letter code: NADH-quinone oxidoreductase subunit N (464 aa).

14 consecutive transmembrane segments (helical) span residues 6–26 (FLYI…LVLG), 36–56 (SMSL…LIYF), 75–95 (CLAR…FFFA), 101–121 (YEFA…VEAH), 123–143 (FLSF…LVCF), 157–177 (FFVL…LVYG), 197–217 (LGAT…LGAV), 231–253 (PTVA…FAGL), 257–279 (VVIP…MVVG), 293–313 (FAYA…TGVV), 317–337 (PVLF…TVLL), 360–380 (AFTF…SGFF), 395–415 (FGVP…IPCF), and 439–459 (NVGL…VVLL).

This sequence belongs to the complex I subunit 2 family. As to quaternary structure, NDH-1 is composed of 14 different subunits. Subunits NuoA, H, J, K, L, M, N constitute the membrane sector of the complex.

It localises to the cell inner membrane. The catalysed reaction is a quinone + NADH + 5 H(+)(in) = a quinol + NAD(+) + 4 H(+)(out). In terms of biological role, NDH-1 shuttles electrons from NADH, via FMN and iron-sulfur (Fe-S) centers, to quinones in the respiratory chain. The immediate electron acceptor for the enzyme in this species is believed to be ubiquinone. Couples the redox reaction to proton translocation (for every two electrons transferred, four hydrogen ions are translocated across the cytoplasmic membrane), and thus conserves the redox energy in a proton gradient. The sequence is that of NADH-quinone oxidoreductase subunit N from Anaplasma phagocytophilum (strain HZ).